A 175-amino-acid polypeptide reads, in one-letter code: Disulfide bond formation protein B (175 aa).

At Met-1 to Ser-13 the chain is on the cytoplasmic side. Residues Trp-14–Tyr-30 traverse the membrane as a helical segment. The Periplasmic portion of the chain corresponds to Phe-31 to Leu-48. Cys-40 and Cys-43 form a disulfide bridge. A helical membrane pass occupies residues Ala-49–Pro-64. Residues Lys-65–Ile-71 are Cytoplasmic-facing. The chain crosses the membrane as a helical span at residues Leu-72–Leu-89. Residues Ala-90–Glu-144 are Periplasmic-facing. Cys-104 and Cys-130 are joined by a disulfide. The chain crosses the membrane as a helical span at residues Trp-145 to Pro-163. Residues Ile-164–Lys-175 are Cytoplasmic-facing.

This sequence belongs to the DsbB family.

It localises to the cell inner membrane. In terms of biological role, required for disulfide bond formation in some periplasmic proteins. Acts by oxidizing the DsbA protein. The protein is Disulfide bond formation protein B of Shewanella sp. (strain W3-18-1).